We begin with the raw amino-acid sequence, 245 residues long: TLC domain-containing protein 5 (245 aa).

The next 6 helical transmembrane spans lie at 1-21, 38-58, 75-95, 99-119, 162-182, and 191-211; these read MAVGLCVQVLCSLGGWLSLYT, LVTFTHGVLSIGLSAYIGFID, VHVLCLTLGYFIFDLGWCIYF, GPLMLAHHTLSILGIIMALAL, FLFVALFTGVRIGVGAHLLFC, and WFVKVGGVAMYAVSWCFMVSI. The TLC domain occupies 29–204; it reads HRSCEWSCRL…VGGVAMYAVS (176 aa).

It belongs to the TLCD5 family.

It is found in the membrane. This chain is TLC domain-containing protein 5 (Tlcd5), found in Mus musculus (Mouse).